The following is a 184-amino-acid chain: FMRFamide-related peptides (184 aa).

The propeptide occupies 1–44 (MLVSSSVLKDDSSLRIFKESPNEFEYIIKRHDMDDRKEDTESKE). At phenylalanine 56 the chain carries Phenylalanine amide. The propeptide occupies 59 to 83 (GQSFFNNLDNSAFDNEIDSKVSRHP). At phenylalanine 94 the chain carries Phenylalanine amide. Positions 97–107 (SGMKSTNDEQP) are excised as a propeptide. Phenylalanine 119 is subject to Phenylalanine amide. Positions 122-184 (NIQIVPTDFD…SLETNSNHRE (63 aa)) are excised as a propeptide.

It belongs to the FARP (FMRFamide related peptide) family. As to expression, expressed throughout the central nervous system.

Its subcellular location is the secreted. In insects, FMRFamide and related peptides have modulatory actions at skeletal neuromuscular junctions, and peptides that are immunologically related to FMRFamide are released into the circulation from neurohemal organs. In Camponotus floridanus (Florida carpenter ant), this protein is FMRFamide-related peptides.